Consider the following 478-residue polypeptide: RNA pseudouridine synthase 3, mitochondrial (478 aa).

Residues 1–20 (MWKAKTCFRQIYLTVLIRRY) constitute a mitochondrion transit peptide. One can recognise an S4 RNA-binding domain in the interval 92–162 (EEIYDKAIQT…MRISKRYDTI (71 aa)). Asp-232 is an active-site residue.

It belongs to the pseudouridine synthase RluA family.

It is found in the mitochondrion. The enzyme catalyses a uridine in RNA = a pseudouridine in RNA. In Arabidopsis thaliana (Mouse-ear cress), this protein is RNA pseudouridine synthase 3, mitochondrial.